Here is a 176-residue protein sequence, read N- to C-terminus: Nascent polypeptide-associated complex subunit alpha (176 aa).

The 65-residue stretch at 16-80 (PKNEKKAREL…AKVDDMNQRI (65 aa)) folds into the NAC-A/B domain. Positions 83–110 (AQAAQAAETDAHAGHTHSHGEEDKSPEA) are disordered. Residues 91-110 (TDAHAGHTHSHGEEDKSPEA) are compositionally biased toward basic and acidic residues. A UBA domain is found at 138 to 175 (LDAKDIDIIVEQTQVSRAKAVKALRKHDGDMVNAIMEL).

Belongs to the NAC-alpha family. In terms of assembly, part of the nascent polypeptide-associated complex (NAC), consisting of EGD2 and EGD1. NAC associates with ribosomes via EGD1.

Its subcellular location is the cytoplasm. It localises to the nucleus. Functionally, component of the nascent polypeptide-associated complex (NAC), a dynamic component of the ribosomal exit tunnel, protecting the emerging polypeptides from interaction with other cytoplasmic proteins to ensure appropriate nascent protein targeting. The NAC complex also promotes mitochondrial protein import by enhancing productive ribosome interactions with the outer mitochondrial membrane and blocks the inappropriate interaction of ribosomes translating non-secretory nascent polypeptides with translocation sites in the membrane of the endoplasmic reticulum. EGD2 may also be involved in transcription regulation. The polypeptide is Nascent polypeptide-associated complex subunit alpha (EGD2) (Scheffersomyces stipitis (strain ATCC 58785 / CBS 6054 / NBRC 10063 / NRRL Y-11545) (Yeast)).